We begin with the raw amino-acid sequence, 300 residues long: Actin-related protein 2/3 complex subunit 2 (300 aa).

2 positions are modified to N6-acetyllysine: K275 and K295.

This sequence belongs to the ARPC2 family. In terms of assembly, component of the Arp2/3 complex composed of ACTR2/ARP2, ACTR3/ARP3, ARPC1B/p41-ARC, ARPC2/p34-ARC, ARPC3/p21-ARC, ARPC4/p20-ARC and ARPC5/p16-ARC. Interacts with SHANK3; the interaction probably mediates the association of SHANK3 with the Arp2/3 complex.

The protein resides in the cytoplasm. The protein localises to the cytoskeleton. It is found in the cell projection. Its subcellular location is the synapse. It localises to the synaptosome. The protein resides in the nucleus. Actin-binding component of the Arp2/3 complex, a multiprotein complex that mediates actin polymerization upon stimulation by nucleation-promoting factor (NPF). The Arp2/3 complex mediates the formation of branched actin networks in the cytoplasm, providing the force for cell motility. Seems to contact the mother actin filament. In addition to its role in the cytoplasmic cytoskeleton, the Arp2/3 complex also promotes actin polymerization in the nucleus, thereby regulating gene transcription and repair of damaged DNA. The Arp2/3 complex promotes homologous recombination (HR) repair in response to DNA damage by promoting nuclear actin polymerization, leading to drive motility of double-strand breaks (DSBs). In Rattus norvegicus (Rat), this protein is Actin-related protein 2/3 complex subunit 2.